A 304-amino-acid chain; its full sequence is Dihydroorotate dehydrogenase B (NAD(+)), catalytic subunit (304 aa).

FMN contacts are provided by residues Ser21 and 45 to 46; that span reads KA. Residues Lys45 and 69–73 contribute to the substrate site; that span reads NAIGL. Positions 99 and 127 each coordinate FMN. Residue Asn127 participates in substrate binding. The active-site Nucleophile is the Cys130. Residues Lys165 and Ile191 each contribute to the FMN site. 192–193 provides a ligand contact to substrate; it reads NT. FMN is bound by residues Gly217, 243–244, and 265–266; these read GG and GT.

This sequence belongs to the dihydroorotate dehydrogenase family. Type 1 subfamily. As to quaternary structure, heterotetramer of 2 PyrK and 2 PyrD type B subunits. It depends on FMN as a cofactor.

It is found in the cytoplasm. The enzyme catalyses (S)-dihydroorotate + NAD(+) = orotate + NADH + H(+). It participates in pyrimidine metabolism; UMP biosynthesis via de novo pathway; orotate from (S)-dihydroorotate (NAD(+) route): step 1/1. Its function is as follows. Catalyzes the conversion of dihydroorotate to orotate with NAD(+) as electron acceptor. The protein is Dihydroorotate dehydrogenase B (NAD(+)), catalytic subunit (pyrD) of Listeria innocua serovar 6a (strain ATCC BAA-680 / CLIP 11262).